A 525-amino-acid chain; its full sequence is Penton protein (525 aa).

The tract at residues Met-1–Gln-47 is disordered. Residues Thr-8–Glu-18 show a composition bias toward pro residues. Low complexity predominate over residues Ala-36 to Gln-47.

It belongs to the adenoviridae penton family. As to quaternary structure, interacts with the fiber protein (via N-terminal tail region). Interacts with the capsid vertex protein; this interaction binds the penton base to neighboring peripentonal hexons.

It localises to the virion. The protein resides in the host nucleus. In terms of biological role, major capsid protein that self-associates to form penton base pentamers, each in the shape of a pentagon, situated at the 12 vertices of the pseudo T=25 capsid. Involved in virus secondary attachment to host cell after initial attachment by the fiber protein, and in endocytosis of virions. As the virus enters the host cell, penton proteins are shed concomitant with virion acidification in the endosome. The protein is Penton protein of Galliformes (FAdV-10).